The primary structure comprises 349 residues: Cyclic AMP-dependent transcription factor ATF-4 (349 aa).

3 disordered regions span residues 49–75 (FSSD…TGKE), 204–271 (PPCV…TAKV), and 279–298 (KLKK…QKKR). P60 bears the 4-hydroxyproline mark. T212 is subject to Phosphothreonine. A phosphoserine mark is found at S214, S218, S223, S230, and S234. The BetaTrCP degron motif signature appears at 214–223 (SDNDSGICMS). Residues 229–239 (GSPQHSPSTSR) show a composition bias toward polar residues. P235 carries the post-translational modification 4-hydroxyproline. Residue S247 is modified to Phosphoserine. A Phosphoserine; by RPS6KA3 modification is found at S251. Residues K258 and K270 each participate in a glycyl lysine isopeptide (Lys-Gly) (interchain with G-Cter in SUMO2) cross-link. The region spanning 276–339 (LDKKLKKMEQ…QYLKDLIEEV (64 aa)) is the bZIP domain. Positions 278-298 (KKLKKMEQNKTAATRYRQKKR) are basic motif. An interaction with GABBR1 region spans residues 303 to 339 (ALTGECKELEKKNEALKEKADSLAKEIQYLKDLIEEV). Residues 304–332 (LTGECKELEKKNEALKEKADSLAKEIQYL) are leucine-zipper. K309 carries the N6-acetyllysine modification.

It belongs to the bZIP family. In terms of assembly, binds DNA as a homodimer and as a heterodimer. Heterodimer; heterodimerizes with CEBPB. Heterodimer; heterodimerizes with DDIT3/CHOP. Interacts with CEP290 (via an N-terminal region). Interacts with NEK6, DAPK2 (isoform 2) and ZIPK/DAPK3. Interacts (via its leucine zipper domain) with GABBR1 and GABBR2 (via their C-termini). Forms a heterodimer with TXLNG in osteoblasts. Interacts (via its DNA binding domain) with FOXO1 (C-terminal half); the interaction occurs in osteoblasts and regulates glucose homeostasis through suppression of beta-cell proliferation and a decrease in insulin production. Interacts with SATB2; the interaction results in enhanced DNA binding and transactivation by these transcription factors. Interacts with ABRAXAS2. Interacts with TRIB3, inhibiting the transactivation activity of ATF4. Interacts with DISC1; which inhibits ATF4 transcription factor activity by disrupting ATF4 dimerization and DNA-binding. Interacts with EP300/p300; EP300/p300 stabilizes ATF4 and increases its transcriptional activity independently of its catalytic activity by preventing its ubiquitination. Post-translationally, ubiquitinated by SCF(BTRC) in response to mTORC1 signal, followed by proteasomal degradation and leading to down-regulate expression of SIRT4. Interaction with EP300/p300 inhibits ubiquitination by SCF(BTRC). In terms of processing, phosphorylation at Ser-251 by RPS6KA3/RSK2 in osteoblasts enhances transactivation activity and promotes osteoblast differentiation. Phosphorylated on the betaTrCP degron motif at Ser-218, followed by phosphorylation at Thr-212, Ser-223, Ser-230, Ser-234 and Ser-247, promoting interaction with BTRC and ubiquitination. Phosphorylation is promoted by mTORC1. Phosphorylation at Ser-214 by CK2 decreases its stability. Phosphorylated by NEK6. Hydroxylated by PHD3, leading to decreased protein stability. As to expression, ubiquitously expressed in adults.

The protein localises to the nucleus. The protein resides in the nucleus speckle. Its subcellular location is the cytoplasm. It localises to the cell membrane. It is found in the cytoskeleton. The protein localises to the microtubule organizing center. The protein resides in the centrosome. Functionally, transcription factor that binds the cAMP response element (CRE) (consensus: 5'-GTGACGT[AC][AG]-3') and displays two biological functions, as regulator of metabolic and redox processes under normal cellular conditions, and as master transcription factor during integrated stress response (ISR). Binds to asymmetric CRE's as a heterodimer and to palindromic CRE's as a homodimer. Core effector of the ISR, which is required for adaptation to various stress such as endoplasmic reticulum (ER) stress, amino acid starvation, mitochondrial stress or oxidative stress. During ISR, ATF4 translation is induced via an alternative ribosome translation re-initiation mechanism in response to EIF2S1/eIF-2-alpha phosphorylation, and stress-induced ATF4 acts as a master transcription factor of stress-responsive genes in order to promote cell recovery. Promotes the transcription of genes linked to amino acid sufficiency and resistance to oxidative stress to protect cells against metabolic consequences of ER oxidation. Activates the transcription of NLRP1, possibly in concert with other factors in response to ER stress. Activates the transcription of asparagine synthetase (ASNS) in response to amino acid deprivation or ER stress. However, when associated with DDIT3/CHOP, the transcriptional activation of the ASNS gene is inhibited in response to amino acid deprivation. Together with DDIT3/CHOP, mediates programmed cell death by promoting the expression of genes involved in cellular amino acid metabolic processes, mRNA translation and the terminal unfolded protein response (terminal UPR), a cellular response that elicits programmed cell death when ER stress is prolonged and unresolved. Activates the expression of COX7A2L/SCAF1 downstream of the EIF2AK3/PERK-mediated unfolded protein response, thereby promoting formation of respiratory chain supercomplexes and increasing mitochondrial oxidative phosphorylation. Together with DDIT3/CHOP, activates the transcription of the IRS-regulator TRIB3 and promotes ER stress-induced neuronal cell death by regulating the expression of BBC3/PUMA in response to ER stress. May cooperate with the UPR transcriptional regulator QRICH1 to regulate ER protein homeostasis which is critical for cell viability in response to ER stress. In the absence of stress, ATF4 translation is at low levels and it is required for normal metabolic processes such as embryonic lens formation, fetal liver hematopoiesis, bone development and synaptic plasticity. Acts as a regulator of osteoblast differentiation in response to phosphorylation by RPS6KA3/RSK2: phosphorylation in osteoblasts enhances transactivation activity and promotes expression of osteoblast-specific genes and post-transcriptionally regulates the synthesis of Type I collagen, the main constituent of the bone matrix. Cooperates with FOXO1 in osteoblasts to regulate glucose homeostasis through suppression of beta-cell production and decrease in insulin production. Activates transcription of SIRT4. Regulates the circadian expression of the core clock component PER2 and the serotonin transporter SLC6A4. Binds in a circadian time-dependent manner to the cAMP response elements (CRE) in the SLC6A4 and PER2 promoters and periodically activates the transcription of these genes. Mainly acts as a transcriptional activator in cellular stress adaptation, but it can also act as a transcriptional repressor: acts as a regulator of synaptic plasticity by repressing transcription, thereby inhibiting induction and maintenance of long-term memory. Regulates synaptic functions via interaction with DISC1 in neurons, which inhibits ATF4 transcription factor activity by disrupting ATF4 dimerization and DNA-binding. The sequence is that of Cyclic AMP-dependent transcription factor ATF-4 from Mus musculus (Mouse).